We begin with the raw amino-acid sequence, 200 residues long: Small ribosomal subunit protein uS4 (200 aa).

The segment at 22 to 42 (TGKELEKRPYAPGPHGPNQRK) is disordered. Residues 92–152 (ARLDNLVYRM…EKSNSLVVVK (61 aa)) enclose the S4 RNA-binding domain.

The protein belongs to the universal ribosomal protein uS4 family. Part of the 30S ribosomal subunit. Contacts protein S5. The interaction surface between S4 and S5 is involved in control of translational fidelity.

In terms of biological role, one of the primary rRNA binding proteins, it binds directly to 16S rRNA where it nucleates assembly of the body of the 30S subunit. Its function is as follows. With S5 and S12 plays an important role in translational accuracy. This chain is Small ribosomal subunit protein uS4, found in Bacillus mycoides (strain KBAB4) (Bacillus weihenstephanensis).